The primary structure comprises 271 residues: 4-hydroxy-tetrahydrodipicolinate reductase (271 aa).

Residues 11–16 (GGSGRM) and Glu-37 each bind NAD(+). Arg-38 lines the NADP(+) pocket. Residues 101–103 (GTT) and 125–128 (APNM) contribute to the NAD(+) site. Catalysis depends on His-158, which acts as the Proton donor/acceptor. His-159 is a (S)-2,3,4,5-tetrahydrodipicolinate binding site. Lys-162 (proton donor) is an active-site residue. Position 168–169 (168–169 (GT)) interacts with (S)-2,3,4,5-tetrahydrodipicolinate.

It belongs to the DapB family.

It localises to the cytoplasm. The enzyme catalyses (S)-2,3,4,5-tetrahydrodipicolinate + NAD(+) + H2O = (2S,4S)-4-hydroxy-2,3,4,5-tetrahydrodipicolinate + NADH + H(+). It catalyses the reaction (S)-2,3,4,5-tetrahydrodipicolinate + NADP(+) + H2O = (2S,4S)-4-hydroxy-2,3,4,5-tetrahydrodipicolinate + NADPH + H(+). It participates in amino-acid biosynthesis; L-lysine biosynthesis via DAP pathway; (S)-tetrahydrodipicolinate from L-aspartate: step 4/4. Catalyzes the conversion of 4-hydroxy-tetrahydrodipicolinate (HTPA) to tetrahydrodipicolinate. The sequence is that of 4-hydroxy-tetrahydrodipicolinate reductase from Shewanella piezotolerans (strain WP3 / JCM 13877).